A 313-amino-acid polypeptide reads, in one-letter code: Curved DNA-binding protein (313 aa).

The 65-residue stretch at 5–69 (DYYKILGVSR…EKRKAYDAIG (65 aa)) folds into the J domain. The interval 71-93 (GWKQGQGFTPPPGWESRPGGEGV) is disordered.

It localises to the cytoplasm. Its subcellular location is the nucleoid. Its function is as follows. DNA-binding protein that preferentially recognizes a curved DNA sequence. It is probably a functional analog of DnaJ; displays overlapping activities with DnaJ, but functions under different conditions, probably acting as a molecular chaperone in an adaptive response to environmental stresses other than heat shock. Lacks autonomous chaperone activity; binds native substrates and targets them for recognition by DnaK. Its activity is inhibited by the binding of CbpM. This Coxiella burnetii (strain Dugway 5J108-111) protein is Curved DNA-binding protein.